The following is a 301-amino-acid chain: UBX domain-containing protein 2 (301 aa).

Positions 1–61 (MSRNIRTFRD…AARGPDSEAH (61 aa)) are disordered. Positions 89 to 153 (TISLTLHLWS…KVNRHHEEYV (65 aa)) constitute an SEP domain. The interval 176–200 (GQSSSSATTAGTSSATTDHNPDHTA) is disordered. Low complexity predominate over residues 178 to 192 (SSSSATTAGTSSATT). Positions 218-295 (MNEPTTNIQI…NVLNSVVAVK (78 aa)) constitute a UBX domain.

It belongs to the NSFL1C family. As to quaternary structure, interacts with cdc-48.1 (via N-terminus) and cdc-48.2 (via N-terminus). Interacts with kinase air-1. In terms of tissue distribution, expressed in the germline (at protein level). Expressed in spermatocytes but not in mature sperm (at protein level). Ubiquitously expressed. Predominantly expressed in the spermatheca.

The protein localises to the cytoplasm. It is found in the perinuclear region. It localises to the nucleus. Its subcellular location is the cytoskeleton. The protein resides in the microtubule organizing center. The protein localises to the centrosome. Its function is as follows. Ubiquitin-binding protein which acts as an adapter for ATPase cdc-48.1 and/or cdc-48.2, conferring substrate specificity. Together with ubxn-2 and ubxn-3, plays a role in hermaphrodite spermatogenesis probably by promoting the degradation of sex determination terminal factor tra-1. Probably in association with ATPase cdc-48.1 or/and cdc-48.2, regulates the centrosomal levels of kinase air-1 levels during mitotic progression by promoting air-1 removal from centrosomes in prophase. Also, regulates spindle orientation in the one-cell embryo by controlling centration and rotation of the pronuclei-centrosome complex in prophase. The sequence is that of UBX domain-containing protein 2 from Caenorhabditis elegans.